A 150-amino-acid polypeptide reads, in one-letter code: MSDWDKPTVIGFRQQKPTVAKGSTLNAAQRAGLVISSESKGAGQSKGPADHQRIAKLDRDDAPKPPEKVSADVGKAVATARMAIKNAEGKSMTQKELATSVNAKPQDIADLESGRAVPDQALLGKLERKLNVKLRGAKNLIGTPLHPKKK.

The tract at residues 36 to 71 (SSESKGAGQSKGPADHQRIAKLDRDDAPKPPEKVSA) is disordered. Residues 48-70 (PADHQRIAKLDRDDAPKPPEKVS) are compositionally biased toward basic and acidic residues. Residues 84-137 (IKNAEGKSMTQKELATSVNAKPQDIADLESGRAVPDQALLGKLERKLNVKLRGA) enclose the HTH cro/C1-type domain. The H-T-H motif DNA-binding region spans 94 to 113 (QKELATSVNAKPQDIADLES).

The protein belongs to the MBF1 family.

Transcriptional coactivator that stimulates GCN4-dependent transcriptional activity by bridging the DNA-binding region of GCN4 and TBP (SPT15), thereby recruiting TBP to GCN4-bound promoters. Involved in induction of the ribosome quality control (RQC) pathway; a pathway that degrades nascent peptide chains during problematic translation. Required to prevent stalled ribosomes from frameshifting. This chain is Multiprotein-bridging factor 1 (MBF1), found in Cryptococcus neoformans var. neoformans serotype D (strain B-3501A) (Filobasidiella neoformans).